The chain runs to 58 residues: MSEIKVGKNESLDSALRRFKRTCQRAGVLSEARKHEHYEKPSVKRKKKSEAARKRKFK.

The interval 27-58 (GVLSEARKHEHYEKPSVKRKKKSEAARKRKFK) is disordered. Residues 31–42 (EARKHEHYEKPS) are compositionally biased toward basic and acidic residues. The span at 43–58 (VKRKKKSEAARKRKFK) shows a compositional bias: basic residues.

It belongs to the bacterial ribosomal protein bS21 family.

The protein is Small ribosomal subunit protein bS21 of Desulfitobacterium hafniense (strain DSM 10664 / DCB-2).